Here is a 1006-residue protein sequence, read N- to C-terminus: DNA polymerase (1006 aa).

This sequence belongs to the DNA polymerase type-B family. Interacts with OPG148. Component of the Uracil-DNA glycosylase(UDG)-OPG148-polymerase complex; OPG148 and OPG116/UDG form a heterodimeric processivity factor that associates with OPG071 to form the processive polymerase holoenzyme.

It catalyses the reaction DNA(n) + a 2'-deoxyribonucleoside 5'-triphosphate = DNA(n+1) + diphosphate. Its function is as follows. Catalyzes DNA synthesis. Acquires processivity by associating with a heterodimeric processivity factor comprised of the viral OPG148 and OPG116 proteins, thereby forming the DNA polymerase holoenzyme. Displays 3'- to 5' exonuclease activity. Might participate in viral DNA recombination. Does not perform OPG116/D4synthesis across an abasic site. This is DNA polymerase (OPG071) from Homo sapiens (Human).